A 305-amino-acid polypeptide reads, in one-letter code: Deoxyhypusine hydroxylase (305 aa).

HEAT-like PBS-type repeat units follow at residues 54 to 80 (LKHE…VLKD) and 87 to 113 (VRHE…YAED). Positions 56, 89, and 90 each coordinate Fe cation. Residues 137–160 (EQTKDGTDENPYCSVDPAPPAQRK) form a disordered region. 3 HEAT-like PBS-type repeats span residues 178-204 (DRYR…GLQC), 209-235 (FRHE…ALEK), and 242-268 (VRHE…YRKD). The Fe cation site is built by H211, H244, and E245.

The protein belongs to the deoxyhypusine hydroxylase family. Fe(2+) is required as a cofactor.

It carries out the reaction [eIF5A protein]-deoxyhypusine + AH2 + O2 = [eIF5A protein]-hypusine + A + H2O. It functions in the pathway protein modification; eIF5A hypusination. Its function is as follows. Catalyzes the hydroxylation of the N(6)-(4-aminobutyl)-L-lysine intermediate produced by deoxyhypusine synthase/DHPS on a critical lysine of the eukaryotic translation initiation factor 5A/eIF-5A. This is the second step of the post-translational modification of that lysine into an unusual amino acid residue named hypusine. Hypusination is unique to mature eIF-5A factor and is essential for its function. The chain is Deoxyhypusine hydroxylase (dohh) from Danio rerio (Zebrafish).